Reading from the N-terminus, the 150-residue chain is Ribosomal RNA large subunit methyltransferase H (150 aa).

S-adenosyl-L-methionine-binding positions include A100 and 118–123; that span reads LSEMTF.

Belongs to the RNA methyltransferase RlmH family. As to quaternary structure, homodimer.

The protein localises to the cytoplasm. The enzyme catalyses pseudouridine(1915) in 23S rRNA + S-adenosyl-L-methionine = N(3)-methylpseudouridine(1915) in 23S rRNA + S-adenosyl-L-homocysteine + H(+). Functionally, specifically methylates the pseudouridine at position 1915 (m3Psi1915) in 23S rRNA. This Helicobacter pylori (strain Shi470) protein is Ribosomal RNA large subunit methyltransferase H.